Consider the following 1342-residue polypeptide: DNA-directed RNA polymerase subunit beta (1342 aa).

Belongs to the RNA polymerase beta chain family. In terms of assembly, the RNAP catalytic core consists of 2 alpha, 1 beta, 1 beta' and 1 omega subunit. When a sigma factor is associated with the core the holoenzyme is formed, which can initiate transcription.

The catalysed reaction is RNA(n) + a ribonucleoside 5'-triphosphate = RNA(n+1) + diphosphate. Functionally, DNA-dependent RNA polymerase catalyzes the transcription of DNA into RNA using the four ribonucleoside triphosphates as substrates. In Salmonella typhimurium (strain LT2 / SGSC1412 / ATCC 700720), this protein is DNA-directed RNA polymerase subunit beta.